A 245-amino-acid chain; its full sequence is DNA polymerase sliding clamp 2 (245 aa).

The protein belongs to the PCNA family. As to quaternary structure, homotrimer. The subunits circularize to form a toroid; DNA passes through its center. Replication factor C (RFC) is required to load the toroid on the DNA.

Sliding clamp subunit that acts as a moving platform for DNA processing. Responsible for tethering the catalytic subunit of DNA polymerase and other proteins to DNA during high-speed replication. The chain is DNA polymerase sliding clamp 2 from Sulfolobus acidocaldarius (strain ATCC 33909 / DSM 639 / JCM 8929 / NBRC 15157 / NCIMB 11770).